We begin with the raw amino-acid sequence, 371 residues long: tRNA-specific 2-thiouridylase MnmA (371 aa).

Residues 13 to 20 (GMSGGVDS) and methionine 39 each bind ATP. The interval 99-101 (NPD) is interaction with target base in tRNA. The active-site Nucleophile is the cysteine 104. A disulfide bridge links cysteine 104 with cysteine 200. Glycine 128 is a binding site for ATP. The segment at 150–152 (KDQ) is interaction with tRNA. The active-site Cysteine persulfide intermediate is cysteine 200. An interaction with tRNA region spans residues 308–309 (RY).

It belongs to the MnmA/TRMU family.

It is found in the cytoplasm. It carries out the reaction S-sulfanyl-L-cysteinyl-[protein] + uridine(34) in tRNA + AH2 + ATP = 2-thiouridine(34) in tRNA + L-cysteinyl-[protein] + A + AMP + diphosphate + H(+). Catalyzes the 2-thiolation of uridine at the wobble position (U34) of tRNA, leading to the formation of s(2)U34. The sequence is that of tRNA-specific 2-thiouridylase MnmA from Listeria monocytogenes serovar 1/2a (strain ATCC BAA-679 / EGD-e).